We begin with the raw amino-acid sequence, 153 residues long: Mediator of RNA polymerase II transcription subunit 22 (153 aa).

Belongs to the Mediator complex subunit 22 family. Component of the Mediator complex.

The protein localises to the nucleus. Component of the Mediator complex, a coactivator involved in the regulated transcription of nearly all RNA polymerase II-dependent genes. Mediator functions as a bridge to convey information from gene-specific regulatory proteins to the basal RNA polymerase II transcription machinery. Mediator is recruited to promoters by direct interactions with regulatory proteins and serves as a scaffold for the assembly of a functional preinitiation complex with RNA polymerase II and the general transcription factors. The sequence is that of Mediator of RNA polymerase II transcription subunit 22 (mdt-22) from Caenorhabditis briggsae.